Reading from the N-terminus, the 530-residue chain is Pentatricopeptide repeat-containing protein At5g56310 (530 aa).

PPR repeat units follow at residues 77–114 (NTYLHNTMIRALSLLDEPNAHSIAITVYRKLWALCAKP), 115–149 (DTFTFPFVLKIAVRVSDVWFGRQIHGQVVVFGFDS), 150–180 (SVHVVTGLIQMYFSCGGLGDARKMFDEMLVK), 181–211 (DVNVWNALLAGYGKVGEMDEARSLLEMMPCW), 214–248 (NEVSWTCVISGYAKSGRASEAIEVFQRMLMENVEP), 249–283 (DEVTLLAVLSACADLGSLELGERICSYVDHRGMNR), 284–314 (AVSLNNAVIDMYAKSGNITKALDVFECVNER), 315–349 (NVVTWTTIIAGLATHGHGAEALAMFNRMVKAGVRP), 350–380 (NDVTFIAILSACSHVGWVDLGKRLFNSMRSK), and 386–420 (NIEHYGCMIDLLGRAGKLREADEVIKSMPFKANAA). The type E motif stretch occupies residues 421–496 (IWGSLLAASN…MAGESSIEVE (76 aa)). Positions 497-527 (NRVYKFISGDLTHPQVERIHEILQEMDLQIQ) are type E(+) motif.

This sequence belongs to the PPR family. PCMP-E subfamily.

The polypeptide is Pentatricopeptide repeat-containing protein At5g56310 (PCMP-E13) (Arabidopsis thaliana (Mouse-ear cress)).